The following is a 158-amino-acid chain: Auxin-responsive protein IAA31 (158 aa).

Low complexity predominate over residues 1–40 (MEVSNSCSSFSSSSVDSTKPSPSESSVNLSLSLTFPSTSP). Residues 1–49 (MEVSNSCSSFSSSSVDSTKPSPSESSVNLSLSLTFPSTSPQREARQDWP) form a disordered region. The EAR-like (transcriptional repression) signature appears at 29–33 (LSLSL). Residues 72–157 (SLFVKVYMEG…RRLKITRPER (86 aa)) enclose the PB1 domain.

Belongs to the Aux/IAA family. Homodimers and heterodimers.

The protein resides in the nucleus. Functionally, aux/IAA proteins are short-lived transcriptional factors that function as repressors of early auxin response genes at low auxin concentrations. Repression is thought to result from the interaction with auxin response factors (ARFs), proteins that bind to the auxin-responsive promoter element (AuxRE). Formation of heterodimers with ARF proteins may alter their ability to modulate early auxin response genes expression. This is Auxin-responsive protein IAA31 (IAA31) from Arabidopsis thaliana (Mouse-ear cress).